We begin with the raw amino-acid sequence, 228 residues long: HTH-type transcriptional regulator TfdT (228 aa).

One can recognise an HTH lysR-type domain in the interval 1–58; the sequence is MEIRQLKYFVAVAEAGGFGTAAQRMHISQPPLTRQIQALERDIGAKLFERTARGVELT. Residues 18-37 constitute a DNA-binding region (H-T-H motif); the sequence is FGTAAQRMHISQPPLTRQIQ.

It belongs to the LysR transcriptional regulatory family.

It localises to the cytoplasm. In terms of biological role, does not seem to be involved in the regulation of 3-chlorocatechol degradation. Does not activate the expression of its presumed target operon, tfdCDEF. The protein is HTH-type transcriptional regulator TfdT (tfdT) of Cupriavidus pinatubonensis (strain JMP 134 / LMG 1197) (Cupriavidus necator (strain JMP 134)).